Consider the following 213-residue polypeptide: Thiopurine S-methyltransferase (213 aa).

S-adenosyl-L-methionine contacts are provided by W10, L45, E66, and R121.

It belongs to the class I-like SAM-binding methyltransferase superfamily. TPMT family.

It is found in the cytoplasm. It carries out the reaction S-adenosyl-L-methionine + a thiopurine = S-adenosyl-L-homocysteine + a thiopurine S-methylether.. This is Thiopurine S-methyltransferase from Aliivibrio fischeri (strain ATCC 700601 / ES114) (Vibrio fischeri).